A 485-amino-acid chain; its full sequence is NADH-quinone oxidoreductase subunit N (485 aa).

Helical transmembrane passes span 8–28 (LIAL…MLSI), 35–55 (FLNA…LWFV), 71–91 (GFAM…CTFA), 105–125 (FYLL…ANHL), 127–147 (SLFL…GYAF), 159–179 (YTIL…LVYA), 203–223 (LLAG…LVPF), 235–255 (PAPV…GVVM), 271–291 (VVLA…ALSQ), 297–317 (LLGY…IALQ), 326–346 (VGVY…VVSL), 373–393 (AAVM…LGFI), 408–430 (WWLV…RVAV), and 455–475 (IVVL…QPLI).

This sequence belongs to the complex I subunit 2 family. As to quaternary structure, NDH-1 is composed of 13 different subunits. Subunits NuoA, H, J, K, L, M, N constitute the membrane sector of the complex.

The protein localises to the cell inner membrane. It carries out the reaction a quinone + NADH + 5 H(+)(in) = a quinol + NAD(+) + 4 H(+)(out). Functionally, NDH-1 shuttles electrons from NADH, via FMN and iron-sulfur (Fe-S) centers, to quinones in the respiratory chain. The immediate electron acceptor for the enzyme in this species is believed to be ubiquinone. Couples the redox reaction to proton translocation (for every two electrons transferred, four hydrogen ions are translocated across the cytoplasmic membrane), and thus conserves the redox energy in a proton gradient. The polypeptide is NADH-quinone oxidoreductase subunit N (Shigella flexneri).